A 439-amino-acid polypeptide reads, in one-letter code: GTPase Der (439 aa).

EngA-type G domains are found at residues 4–169 and 177–352; these read AMVA…PEND and IKIA…EEYN. GTP is bound by residues 10 to 17, 57 to 61, 120 to 123, 183 to 190, 230 to 234, and 295 to 298; these read GRPNVGKS, DTGGL, NKVD, DTAGI, and NKWD. One can recognise a KH-like domain in the interval 353–437; the sequence is KRITTGLLNN…PIVISTKKRG (85 aa).

This sequence belongs to the TRAFAC class TrmE-Era-EngA-EngB-Septin-like GTPase superfamily. EngA (Der) GTPase family. As to quaternary structure, associates with the 50S ribosomal subunit.

In terms of biological role, GTPase that plays an essential role in the late steps of ribosome biogenesis. The protein is GTPase Der of Caldanaerobacter subterraneus subsp. tengcongensis (strain DSM 15242 / JCM 11007 / NBRC 100824 / MB4) (Thermoanaerobacter tengcongensis).